We begin with the raw amino-acid sequence, 375 residues long: ATP-sensitive inward rectifier potassium channel 15 (375 aa).

The Cytoplasmic portion of the chain corresponds to 1 to 60 (MDAIHIGMSSTPLVKHTAGAGLKANRPRVMSKSGHSNVRIDKVDGIYLLYLQDLWTTVID). Residues 61–87 (MKWRYKLTLFAATFVMTWFLFGVIYYA) traverse the membrane as a helical segment. Residues 88–113 (IAFIHGDLEPGEPISNHTPCIMKVDS) are Extracellular-facing. The helical; Pore-forming intramembrane region spans 114–130 (LTGAFLFSLESQTTIGY). Residues 127-132 (TIGYGV) carry the Selectivity filter motif. Residues 131-139 (GVRSITEEC) are Extracellular-facing. Residues 140 to 165 (PHAIFLLVAQLVITTLIEIFITGTFL) traverse the membrane as a helical segment. The Cytoplasmic portion of the chain corresponds to 166–375 (AKIARPKKRA…RTLLLQQSNV (210 aa)).

The protein belongs to the inward rectifier-type potassium channel (TC 1.A.2.1) family. KCNJ15 subfamily. Can form heteromultimeric channels with Kir5.1/KCNJ16. Interacts with PATJ.

It is found in the membrane. The protein resides in the cell membrane. It carries out the reaction K(+)(in) = K(+)(out). With respect to regulation, channel activity is regulated by variations of cytosolic pH; reversibly inhibited by acidic pH values. Inhibited by Ba(2+) and Cs(+) in a voltage-dependent manner. Its function is as follows. Inward rectifier potassium channels are characterized by a greater tendency to allow potassium to flow into the cell rather than out of it. Their voltage dependence is regulated by the concentration of extracellular potassium; as external potassium is raised, the voltage range of the channel opening shifts to more positive voltages. The inward rectification is mainly due to the blockage of outward current by internal magnesium. This Homo sapiens (Human) protein is ATP-sensitive inward rectifier potassium channel 15 (KCNJ15).